Here is a 316-residue protein sequence, read N- to C-terminus: Sideroflexin-4 (316 aa).

5 helical membrane passes run 83 to 103 (QVFL…HKGI), 141 to 161 (LLIL…QIIL), 174 to 194 (ICRS…NILV), 230 to 250 (ISRA…MALL), and 263 to 283 (IAPI…PVSF).

The protein belongs to the sideroflexin family.

The protein resides in the mitochondrion inner membrane. In terms of biological role, mitochondrial amino-acid transporter. Does not act as a serine transporter: not able to mediate transport of serine into mitochondria. The sequence is that of Sideroflexin-4 from Danio rerio (Zebrafish).